The primary structure comprises 557 residues: Acetylcholine receptor subunit alpha-L1 (557 aa).

The signal sequence occupies residues 1–23; sequence MAAALPPMLLLLLLLLLHHPAAA. The Extracellular portion of the chain corresponds to 24 to 244; sequence NPDAKRLYDD…NITLRRKTLF (221 aa). N47 carries an N-linked (GlcNAc...) asparagine glycan. Intrachain disulfides connect C151/C165 and C224/C225. An N-linked (GlcNAc...) asparagine glycan is attached at N235. Helical transmembrane passes span 245–266, 274–294, and 308–329; these read YTVN…VFYL, IALC…ISEI, and YLLF…VLNV. At 330–500 the chain is on the cytoplasmic side; the sequence is HYRKPSTHKM…EFDAEDQDWG (171 aa). Residues 501–523 form a helical membrane-spanning segment; it reads FVAMVLDRLFLWIFTIASIVGTF.

Belongs to the ligand-gated ion channel (TC 1.A.9) family. Acetylcholine receptor (TC 1.A.9.1) subfamily.

The protein localises to the postsynaptic cell membrane. It localises to the cell membrane. Functionally, after binding acetylcholine, the AChR responds by an extensive change in conformation that affects all subunits and leads to opening of an ion-conducting channel across the plasma membrane. The polypeptide is Acetylcholine receptor subunit alpha-L1 (Schistocerca gregaria (Desert locust)).